The following is a 79-amino-acid chain: Translational regulator CsrA (79 aa).

This sequence belongs to the CsrA/RsmA family. Homodimer; the beta-strands of each monomer intercalate to form a hydrophobic core, while the alpha-helices form wings that extend away from the core.

The protein resides in the cytoplasm. In terms of biological role, a translational regulator that binds mRNA to regulate translation initiation and/or mRNA stability. Usually binds in the 5'-UTR at or near the Shine-Dalgarno sequence preventing ribosome-binding, thus repressing translation. Its main target seems to be the major flagellin gene, while its function is anatagonized by FliW. The chain is Translational regulator CsrA from Maridesulfovibrio salexigens (strain ATCC 14822 / DSM 2638 / NCIMB 8403 / VKM B-1763) (Desulfovibrio salexigens).